The primary structure comprises 1708 residues: Clathrin heavy chain 2 (1708 aa).

The tract at residues methionine 1–tyrosine 492 is globular terminal domain. 7 WD40-like repeat regions span residues phenylalanine 25 to threonine 67, alanine 68 to glutamine 113, valine 114 to alanine 155, asparagine 156 to glutamate 205, alanine 206 to glutamine 270, aspartate 271 to aspartate 314, and proline 315 to asparagine 343. A binding site for the uncoating ATPase, involved in lattice disassembly region spans residues glutamate 462 to aspartate 478. The tract at residues isoleucine 493–arginine 536 is flexible linker. A distal segment region spans residues threonine 537–proline 648. Positions threonine 537–tyrosine 1708 are heavy chain arm. 7 CHCR repeats span residues glutamine 551–valine 697, alanine 700–phenylalanine 842, isoleucine 847–aspartate 986, leucine 993–alanine 1138, phenylalanine 1142–alanine 1283, leucine 1288–asparagine 1434, and leucine 1437–phenylalanine 1580. The proximal segment stretch occupies residues valine 653–tyrosine 1708. The interval alanine 1227 to lysine 1536 is involved in binding clathrin light chain. Residues serine 1564–tyrosine 1708 form a trimerization region.

Belongs to the clathrin heavy chain family. Clathrin triskelions, composed of 3 heavy chains and 3 light chains, are the basic subunits of the clathrin coat.

The protein resides in the cytoplasmic vesicle membrane. It is found in the membrane. It localises to the coated pit. Functionally, clathrin is the major protein of the polyhedral coat of coated pits and vesicles. The chain is Clathrin heavy chain 2 from Oryza sativa subsp. japonica (Rice).